We begin with the raw amino-acid sequence, 265 residues long: 5'-nucleotidase SurE (265 aa).

4 residues coordinate a divalent metal cation: D8, D9, S39, and N96.

Belongs to the SurE nucleotidase family. The cofactor is a divalent metal cation.

Its subcellular location is the cytoplasm. The catalysed reaction is a ribonucleoside 5'-phosphate + H2O = a ribonucleoside + phosphate. In terms of biological role, nucleotidase that shows phosphatase activity on nucleoside 5'-monophosphates. This is 5'-nucleotidase SurE from Dehalococcoides mccartyi (strain ATCC BAA-2100 / JCM 16839 / KCTC 5957 / BAV1).